Reading from the N-terminus, the 183-residue chain is A-type ATP synthase subunit E (183 aa).

The protein belongs to the V-ATPase E subunit family. Has multiple subunits, A(3), B(3), C, D, E, F, G, I and K(x); there may be a few other subunits as well.

It is found in the cell membrane. Its function is as follows. Component of the A-type ATP synthase that produces ATP from ADP in the presence of a proton gradient across the membrane. This Methanosarcina mazei (strain ATCC BAA-159 / DSM 3647 / Goe1 / Go1 / JCM 11833 / OCM 88) (Methanosarcina frisia) protein is A-type ATP synthase subunit E.